A 102-amino-acid polypeptide reads, in one-letter code: uncharacterized protein (102 aa).

This is an uncharacterized protein from Methanothermococcus thermolithotrophicus (Methanococcus thermolithotrophicus).